Consider the following 762-residue polypeptide: 5-methyltetrahydropteroyltriglutamate--homocysteine methyltransferase (762 aa).

5-methyltetrahydropteroyltri-L-glutamate is bound by residues 17–20 (REWK) and Lys111. Residues 435 to 437 (IGS) and Glu488 contribute to the L-homocysteine site. Residues 435 to 437 (IGS) and Glu488 each bind L-methionine. Residues 519 to 520 (RC) and Trp565 each bind 5-methyltetrahydropteroyltri-L-glutamate. Asp603 lines the L-homocysteine pocket. Asp603 contributes to the L-methionine binding site. Residue Glu609 coordinates 5-methyltetrahydropteroyltri-L-glutamate. His645, Cys647, and Glu669 together coordinate Zn(2+). Catalysis depends on His698, which acts as the Proton donor. Residue Cys730 participates in Zn(2+) binding.

Belongs to the vitamin-B12 independent methionine synthase family. It depends on Zn(2+) as a cofactor.

The catalysed reaction is 5-methyltetrahydropteroyltri-L-glutamate + L-homocysteine = tetrahydropteroyltri-L-glutamate + L-methionine. It participates in amino-acid biosynthesis; L-methionine biosynthesis via de novo pathway; L-methionine from L-homocysteine (MetE route): step 1/1. Catalyzes the transfer of a methyl group from 5-methyltetrahydrofolate to homocysteine resulting in methionine formation. This is 5-methyltetrahydropteroyltriglutamate--homocysteine methyltransferase from Bacillus mycoides (strain KBAB4) (Bacillus weihenstephanensis).